A 364-amino-acid polypeptide reads, in one-letter code: Probable cysteine protease RDL4 (364 aa).

The first 23 residues, 1–23, serve as a signal peptide directing secretion; that stretch reads MGSAKSAMLILLVAMVIASCATA. A propeptide spans 24–136 (activation peptide); the sequence is IDMSVVSYDD…DRYKTSADDV (113 aa). Residue Asn-87 is glycosylated (N-linked (GlcNAc...) asparagine). 3 cysteine pairs are disulfide-bonded: Cys-158–Cys-199, Cys-192–Cys-232, and Cys-291–Cys-342. Residue Cys-161 is part of the active site. Residues His-297 and Asn-317 contribute to the active site.

It belongs to the peptidase C1 family. As to expression, expressed in inflorescences.

Probable thiol protease. The protein is Probable cysteine protease RDL4 of Arabidopsis thaliana (Mouse-ear cress).